The sequence spans 509 residues: Scavenger receptor class B member 1 (509 aa).

At methionine 1 to alanine 11 the chain is on the cytoplasmic side. The chain crosses the membrane as a helical span at residues leucine 12 to valine 32. Residues proline 33–valine 440 are Extracellular-facing. N-linked (GlcNAc...) asparagine glycosylation is found at asparagine 102, asparagine 108, asparagine 116, asparagine 173, asparagine 212, asparagine 227, asparagine 255, asparagine 310, asparagine 330, and asparagine 383. Cysteine 251 and cysteine 384 form a disulfide bridge. The helical transmembrane segment at leucine 441 to isoleucine 461 threads the bilayer. Topologically, residues tyrosine 462–leucine 509 are cytoplasmic.

The protein belongs to the CD36 family. As to quaternary structure, the C-terminal region binds to PDZK1. In terms of processing, N-glycosylated. Post-translationally, the six cysteines of the extracellular domain are all involved in intramolecular disulfide bonds.

The protein localises to the cell membrane. Its subcellular location is the membrane. It localises to the caveola. Functionally, receptor for different ligands such as phospholipids, cholesterol ester, lipoproteins, phosphatidylserine and apoptotic cells. Receptor for HDL, mediating selective uptake of cholesteryl ether and HDL-dependent cholesterol efflux. Also facilitates the flux of free and esterified cholesterol between the cell surface and apoB-containing lipoproteins and modified lipoproteins, although less efficiently than HDL. May be involved in the phagocytosis of apoptotic cells, via its phosphatidylserine binding activity. The sequence is that of Scavenger receptor class B member 1 (Scarb1) from Rattus norvegicus (Rat).